The sequence spans 483 residues: Protein nucleotidyltransferase YdiU (483 aa).

The ATP site is built by Gly81, Gly83, Arg84, Lys103, Asp115, Gly116, Arg166, and Arg173. The Proton acceptor role is filled by Asp244. Mg(2+)-binding residues include Asn245 and Asp254. Asp254 serves as a coordination point for ATP.

The protein belongs to the SELO family. Mg(2+) serves as cofactor. The cofactor is Mn(2+).

It catalyses the reaction L-seryl-[protein] + ATP = 3-O-(5'-adenylyl)-L-seryl-[protein] + diphosphate. It carries out the reaction L-threonyl-[protein] + ATP = 3-O-(5'-adenylyl)-L-threonyl-[protein] + diphosphate. The catalysed reaction is L-tyrosyl-[protein] + ATP = O-(5'-adenylyl)-L-tyrosyl-[protein] + diphosphate. The enzyme catalyses L-histidyl-[protein] + UTP = N(tele)-(5'-uridylyl)-L-histidyl-[protein] + diphosphate. It catalyses the reaction L-seryl-[protein] + UTP = O-(5'-uridylyl)-L-seryl-[protein] + diphosphate. It carries out the reaction L-tyrosyl-[protein] + UTP = O-(5'-uridylyl)-L-tyrosyl-[protein] + diphosphate. Nucleotidyltransferase involved in the post-translational modification of proteins. It can catalyze the addition of adenosine monophosphate (AMP) or uridine monophosphate (UMP) to a protein, resulting in modifications known as AMPylation and UMPylation. The chain is Protein nucleotidyltransferase YdiU from Shewanella halifaxensis (strain HAW-EB4).